The primary structure comprises 323 residues: Cytochrome c biogenesis protein CcsA (323 aa).

The next 8 helical transmembrane spans lie at Ile-9–Leu-29, Leu-37–Val-57, Leu-71–Phe-91, Val-100–Leu-120, Met-145–Ile-165, Ile-227–Asn-247, Thr-261–His-275, and Ala-288–Leu-308.

It belongs to the CcmF/CycK/Ccl1/NrfE/CcsA family. In terms of assembly, may interact with Ccs1.

The protein resides in the plastid. Its subcellular location is the chloroplast thylakoid membrane. Its function is as follows. Required during biogenesis of c-type cytochromes (cytochrome c6 and cytochrome f) at the step of heme attachment. This Cucumis sativus (Cucumber) protein is Cytochrome c biogenesis protein CcsA.